The primary structure comprises 473 residues: Cannabinoid receptor 1 (473 aa).

Residues 1–118 lie on the Extracellular side of the membrane; the sequence is MKSILDGLAD…CFMILTASQQ (118 aa). Positions 2–23 are required for mitochondrial localization; it reads KSILDGLADTTFRTITTDLLYM. Asn-79 and Asn-85 each carry an N-linked (GlcNAc...) asparagine glycan. Residues 119–144 form a helical membrane-spanning segment; the sequence is LIIAVLSLTLGTFTVLENFLVLCVIL. At 145–156 the chain is on the cytoplasmic side; the sequence is QSRTLRCRPSYH. Residues 157 to 177 form a helical membrane-spanning segment; the sequence is FIGSLAVADLLGSVIFVYSFL. The Extracellular portion of the chain corresponds to 178 to 189; that stretch reads DFHVFHRKDSSN. Residues 190–214 traverse the membrane as a helical segment; sequence VFLFKLGGVTASFTASVGSLFLTAI. At 215–234 the chain is on the cytoplasmic side; the sequence is DRYISIHRPLAYKRIVTRTK. The chain crosses the membrane as a helical span at residues 235-257; the sequence is AVIAFCVMWTIAIIIAVLPLLGW. At 258–275 the chain is on the extracellular side; it reads NCKKLKSVCSDIFPLIDE. A helical transmembrane segment spans residues 276–301; sequence NYLMFWIGVTSILLLFIVYAYVYILW. At 302-346 the chain is on the cytoplasmic side; that stretch reads KAHSHAVRMLQRGTQKSIIIHTSEDGKVQITRPEQTRMDIRLAKT. The chain crosses the membrane as a helical span at residues 347 to 367; the sequence is LVLILVVLIICWGPLLAIMVY. Topologically, residues 368 to 379 are extracellular; sequence DVFGKMNNPIKT. A helical transmembrane segment spans residues 380–401; that stretch reads VFAFCSMLCLMDSTVNPIIYAL. The Cytoplasmic portion of the chain corresponds to 402-473; that stretch reads RSQDLRHAFL…VSTETSGEAV (72 aa). Residue Cys-417 is the site of S-palmitoyl cysteine attachment.

It belongs to the G-protein coupled receptor 1 family. Palmitoylation at Cys-417 is important for recruitment at both plasma membrane and lipid rafts and association with G protein alpha subunits.

Its subcellular location is the cell membrane. The protein localises to the mitochondrion outer membrane. It localises to the cell projection. It is found in the axon. The protein resides in the presynapse. Hemopressin, a peptide derived from hemoglobin subunit alpha (HBA1 and/or HBA2), acts as an antagonist peptide: hemopressin-binding efficiently blocks cannabinoid receptor CNR1 and subsequent signaling. In terms of biological role, G-protein coupled receptor for cannabinoids. Mediates many cannabinoid-induced effects in the central nervous system (CNS), as well as in peripheral tissues. Regulates cellular respiration and energy production in response to cannabinoids. Signaling typically involves reduction in cyclic AMP. The polypeptide is Cannabinoid receptor 1 (CNR1) (Taricha granulosa (Roughskin newt)).